We begin with the raw amino-acid sequence, 56 residues long: Small ribosomal subunit protein uS14 (56 aa).

Residues Cys-21, Cys-24, Cys-39, and Cys-42 each contribute to the Zn(2+) site.

The protein belongs to the universal ribosomal protein uS14 family. In terms of assembly, component of the 40S small ribosomal subunit. The cofactor is Zn(2+).

The protein resides in the cytoplasm. It localises to the cytosol. Its subcellular location is the rough endoplasmic reticulum. In Lysiphlebus testaceipes (Greenbugs aphid parastoid), this protein is Small ribosomal subunit protein uS14 (RpS29).